Reading from the N-terminus, the 299-residue chain is Junctional adhesion molecule A (299 aa).

A signal peptide spans 1–27; the sequence is MGTKAQVERKLLCLFILAILLCSLALG. 2 Ig-like V-type domains span residues 28–125 and 135–228; these read SVTV…VKVK and PTVN…NAVR. The Extracellular portion of the chain corresponds to 28 to 238; the sequence is SVTVHSSEPE…MEAVERNVGV (211 aa). Intrachain disulfides connect Cys-50/Cys-109 and Cys-153/Cys-212. N-linked (GlcNAc...) asparagine glycosylation is present at Asn-185. The helical transmembrane segment at 239–259 threads the bilayer; the sequence is IVAAVLVTLILLGILVFGIWF. The Cytoplasmic portion of the chain corresponds to 260–299; that stretch reads AYSRGHFDRTKKGTSSKKVIYSQPSARSEGEFKQTSSFLV. Phosphoserine is present on residues Ser-281, Ser-284, and Ser-287.

It belongs to the immunoglobulin superfamily. As to quaternary structure, interacts with the ninth PDZ domain of MPDZ. Interacts with the first PDZ domain of PARD3. The association between PARD3 and PARD6B probably disrupts this interaction. Interacts with ITGAL (via I-domain). Interacts with CD151. In terms of assembly, (Microbial infection) Interacts with Mammalian reovirus sigma-1 capsid protein. (Microbial infection) Interacts with Human Rotavirus strain Wa vp4 capsid protein. Post-translationally, N-glycosylated. In terms of processing, (Microbial infection) Cleaved by H.pylori virulence factor PqqE. Cleavage leads to altered tight junction functions. As to expression, expressed in endothelium, epithelium and leukocytes (at protein level).

The protein localises to the cell junction. It localises to the tight junction. Its subcellular location is the cell membrane. Its function is as follows. Seems to play a role in epithelial tight junction formation. Appears early in primordial forms of cell junctions and recruits PARD3. The association of the PARD6-PARD3 complex may prevent the interaction of PARD3 with JAM1, thereby preventing tight junction assembly. Plays a role in regulating monocyte transmigration involved in integrity of epithelial barrier. Ligand for integrin alpha-L/beta-2 involved in memory T-cell and neutrophil transmigration. Involved in platelet activation. In terms of biological role, (Microbial infection) Acts as a receptor for Mammalian reovirus sigma-1. (Microbial infection) Acts as a receptor for Human Rotavirus strain Wa. The sequence is that of Junctional adhesion molecule A (F11R) from Homo sapiens (Human).